A 330-amino-acid chain; its full sequence is GTPase Obg (330 aa).

The 159-residue stretch at 1 to 159 (MQFIDQARIT…WPLQLELKLL (159 aa)) folds into the Obg domain. Residues 160-328 (AEVGIIGLPN…LLERVWKELG (169 aa)) enclose the OBG-type G domain. Residues 166 to 173 (GLPNAGKS), 191 to 195 (FTTLV), 213 to 216 (DIPG), 280 to 283 (NKQE), and 309 to 311 (SAA) contribute to the ATP site. Mg(2+) contacts are provided by Ser-173 and Thr-193.

Belongs to the TRAFAC class OBG-HflX-like GTPase superfamily. OBG GTPase family. Monomer. It depends on Mg(2+) as a cofactor.

The protein localises to the cytoplasm. Functionally, an essential GTPase which binds GTP, GDP and possibly (p)ppGpp with moderate affinity, with high nucleotide exchange rates and a fairly low GTP hydrolysis rate. Plays a role in control of the cell cycle, stress response, ribosome biogenesis and in those bacteria that undergo differentiation, in morphogenesis control. The polypeptide is GTPase Obg (Parasynechococcus marenigrum (strain WH8102)).